We begin with the raw amino-acid sequence, 72 residues long: Galensin (72 aa).

Positions 1–22 (MLTLKKSMLLLFFLGLVSVSLA) are cleaved as a signal peptide. Residues 23 to 48 (DDKREDEAEEGEDKRAAEEERNVEKR) constitute a propeptide that is removed on maturation. F71 is modified (phenylalanine amide).

The protein belongs to the frog skin active peptide (FSAP) family. Brevinin subfamily. In terms of assembly, homodimer; disulfide-linked. As to expression, expressed by the skin glands.

It is found in the secreted. In terms of biological role, antibacterial activity against the Gram-positive bacterium M.luteus and the Gram-negative bacterium E.coli. The sequence is that of Galensin from Kassina senegalensis (Senegal running frog).